The chain runs to 347 residues: MKQTIILLYGGRSAEREVSVLSAESVMRAVNYDRFTVKTFFISQSGDSIKTQEFSHAPGQEDRLMTNETIDWDKKVAPSAIYEEGAVVFPVLHGPMGEDGSVQGFLEVLKMPYVGCNILSSSLAMDKITTKRVLESAGIAQVPYVAIVEGDDVTAKIAEVEEKLAYPVFTKPSNMGSSVGISKSENQEELRQALKLAFRYDSRVLVEQGVNAREIEVGLLGNYDVKSTLPGEVVKDVAFYDYDAKYIDNKVTMDIPAKISDDVVAVMRQNAETAFRAIGGLGLSRCDFFYTDKGEIFLNELNTMPGFTQWSMYPLLWENMGISYPELIERLVDLAKESFDKREAHLI.

One can recognise an ATP-grasp domain in the interval 131–333 (KRVLESAGIA…YPELIERLVD (203 aa)). 161–216 (EEKLAYPVFTKPSNMGSSVGISKSENQEELRQALKLAFRYDSRVLVEQGVNAREIE) is an ATP binding site. Mg(2+) is bound by residues Asp287, Glu300, and Asn302.

It belongs to the D-alanine--D-alanine ligase family. The cofactor is Mg(2+). Mn(2+) serves as cofactor.

It localises to the cytoplasm. It catalyses the reaction 2 D-alanine + ATP = D-alanyl-D-alanine + ADP + phosphate + H(+). The protein operates within cell wall biogenesis; peptidoglycan biosynthesis. Cell wall formation. In Streptococcus pneumoniae (strain JJA), this protein is D-alanine--D-alanine ligase.